The sequence spans 461 residues: Putative ankyrin repeat protein FPV218 (461 aa).

ANK repeat units lie at residues 1-28 (MLSL…HPDS), 31-61 (KGFY…NPNN), 65-94 (ETVS…DTSL), 96-116 (PLYV…DVNV), 120-149 (ESRS…NVNV), 153-182 (KGLS…RVNI), 186-213 (LGRL…PIDI), 217-248 (NGST…ALDN), 250-277 (CNSP…DITI), 281-312 (CGNT…LMRE), 358-385 (NGPT…NVQY), and 431-460 (LPYE…LKNK).

The polypeptide is Putative ankyrin repeat protein FPV218 (Fowlpox virus (strain NVSL) (FPV)).